The following is a 246-amino-acid chain: Bis(5'-nucleosyl)-tetraphosphatase PrpE [asymmetrical] (246 aa).

The protein belongs to the PrpE family. Ni(2+) is required as a cofactor.

The catalysed reaction is P(1),P(4)-bis(5'-guanosyl) tetraphosphate + H2O = GMP + GTP + 2 H(+). Functionally, asymmetrically hydrolyzes Ap4p to yield AMP and ATP. This Bacillus cereus (strain ZK / E33L) protein is Bis(5'-nucleosyl)-tetraphosphatase PrpE [asymmetrical].